Consider the following 177-residue polypeptide: Large ribosomal subunit protein uL6 (177 aa).

Belongs to the universal ribosomal protein uL6 family. As to quaternary structure, part of the 50S ribosomal subunit.

Its function is as follows. This protein binds to the 23S rRNA, and is important in its secondary structure. It is located near the subunit interface in the base of the L7/L12 stalk, and near the tRNA binding site of the peptidyltransferase center. This chain is Large ribosomal subunit protein uL6, found in Shewanella denitrificans (strain OS217 / ATCC BAA-1090 / DSM 15013).